The following is a 394-amino-acid chain: Elongation factor Tu 2 (394 aa).

A tr-type G domain is found at 10-204; the sequence is KPHVNVGTIG…HLDTYIPEPE (195 aa). A G1 region spans residues 19–26; it reads GHVDHGKT. 19-26 provides a ligand contact to GTP; it reads GHVDHGKT. Position 26 (Thr26) interacts with Mg(2+). A G2 region spans residues 60–64; it reads GITIN. The interval 81 to 84 is G3; it reads DCPG. Residues 81–85 and 136–139 contribute to the GTP site; these read DCPGH and NKCD. The interval 136–139 is G4; the sequence is NKCD. Residues 174–176 are G5; sequence SAL.

The protein belongs to the TRAFAC class translation factor GTPase superfamily. Classic translation factor GTPase family. EF-Tu/EF-1A subfamily. As to quaternary structure, monomer.

The protein resides in the cytoplasm. The enzyme catalyses GTP + H2O = GDP + phosphate + H(+). In terms of biological role, GTP hydrolase that promotes the GTP-dependent binding of aminoacyl-tRNA to the A-site of ribosomes during protein biosynthesis. The polypeptide is Elongation factor Tu 2 (Haemophilus influenzae (strain 86-028NP)).